We begin with the raw amino-acid sequence, 370 residues long: Aminomethyltransferase (370 aa).

Belongs to the GcvT family. The glycine cleavage system is composed of four proteins: P, T, L and H.

The catalysed reaction is N(6)-[(R)-S(8)-aminomethyldihydrolipoyl]-L-lysyl-[protein] + (6S)-5,6,7,8-tetrahydrofolate = N(6)-[(R)-dihydrolipoyl]-L-lysyl-[protein] + (6R)-5,10-methylene-5,6,7,8-tetrahydrofolate + NH4(+). Functionally, the glycine cleavage system catalyzes the degradation of glycine. The sequence is that of Aminomethyltransferase from Clostridium botulinum (strain 657 / Type Ba4).